A 313-amino-acid polypeptide reads, in one-letter code: MSLMNWFEDRRKFSGLIGAFIEKATKGYILSERRKDRHIKIDTTKGLWTRCDNCENMLYIRFLRQNKRICEECGYHLQMSSTERIESLIDRGTWHPMDEDMVARDALKFSDEDSYKNRVLFYQKRTGLTDAIQTGIGKLNGIPIALGVMDFQFMGGSMGSVVGEKITRLIEYGTRESMPVIIVCSSGGARMQEGTLSLMQMAKISAVLQIHQAQKKLLYIAILTYPTTGGVTASFGMLGDVIIAEPKAYIAFAGKRVIEQTLRQKIPDGSQVAESLFDHGLLDLIVPRNLLRGVLSEIFELYSSAPCRRSNNS.

Residues 47–313 enclose the CoA carboxyltransferase N-terminal domain; it reads LWTRCDNCEN…SAPCRRSNNS (267 aa). Residues Cys-51, Cys-54, Cys-70, and Cys-73 each contribute to the Zn(2+) site. Residues 51–73 form a C4-type zinc finger; the sequence is CDNCENMLYIRFLRQNKRICEEC.

It belongs to the AccD/PCCB family. In terms of assembly, acetyl-CoA carboxylase is a heterohexamer composed of biotin carboxyl carrier protein, biotin carboxylase and 2 subunits each of ACCase subunit alpha and ACCase plastid-coded subunit beta (accD). Zn(2+) is required as a cofactor.

It localises to the plastid. Its subcellular location is the chloroplast stroma. It catalyses the reaction N(6)-carboxybiotinyl-L-lysyl-[protein] + acetyl-CoA = N(6)-biotinyl-L-lysyl-[protein] + malonyl-CoA. Its pathway is lipid metabolism; malonyl-CoA biosynthesis; malonyl-CoA from acetyl-CoA: step 1/1. Its function is as follows. Component of the acetyl coenzyme A carboxylase (ACC) complex. Biotin carboxylase (BC) catalyzes the carboxylation of biotin on its carrier protein (BCCP) and then the CO(2) group is transferred by the transcarboxylase to acetyl-CoA to form malonyl-CoA. The sequence is that of Acetyl-coenzyme A carboxylase carboxyl transferase subunit beta, chloroplastic from Anthoceros angustus (Hornwort).